Here is a 433-residue protein sequence, read N- to C-terminus: Gamma-glutamyl phosphate reductase (433 aa).

This sequence belongs to the gamma-glutamyl phosphate reductase family.

It localises to the cytoplasm. It catalyses the reaction L-glutamate 5-semialdehyde + phosphate + NADP(+) = L-glutamyl 5-phosphate + NADPH + H(+). The protein operates within amino-acid biosynthesis; L-proline biosynthesis; L-glutamate 5-semialdehyde from L-glutamate: step 2/2. Catalyzes the NADPH-dependent reduction of L-glutamate 5-phosphate into L-glutamate 5-semialdehyde and phosphate. The product spontaneously undergoes cyclization to form 1-pyrroline-5-carboxylate. This is Gamma-glutamyl phosphate reductase from Psychrobacter cryohalolentis (strain ATCC BAA-1226 / DSM 17306 / VKM B-2378 / K5).